The chain runs to 356 residues: DNA polymerase IV (356 aa).

Residues 1–188 enclose the UmuC domain; sequence MDTSRKIIHI…IPVTKFYGVG (188 aa). Residues Asp-11 and Asp-106 each contribute to the Mg(2+) site. Glu-107 is a catalytic residue.

This sequence belongs to the DNA polymerase type-Y family. In terms of assembly, monomer. Mg(2+) is required as a cofactor.

The protein localises to the cytoplasm. The catalysed reaction is DNA(n) + a 2'-deoxyribonucleoside 5'-triphosphate = DNA(n+1) + diphosphate. Its function is as follows. Poorly processive, error-prone DNA polymerase involved in untargeted mutagenesis. Copies undamaged DNA at stalled replication forks, which arise in vivo from mismatched or misaligned primer ends. These misaligned primers can be extended by PolIV. Exhibits no 3'-5' exonuclease (proofreading) activity. May be involved in translesional synthesis, in conjunction with the beta clamp from PolIII. This chain is DNA polymerase IV, found in Listeria innocua serovar 6a (strain ATCC BAA-680 / CLIP 11262).